The following is a 154-amino-acid chain: Large ribosomal subunit protein uL13 (154 aa).

The interval 132 to 154 (PHEAQQPEVLDVKSMNAKNTRSA) is disordered.

This sequence belongs to the universal ribosomal protein uL13 family. As to quaternary structure, part of the 50S ribosomal subunit.

In terms of biological role, this protein is one of the early assembly proteins of the 50S ribosomal subunit, although it is not seen to bind rRNA by itself. It is important during the early stages of 50S assembly. The chain is Large ribosomal subunit protein uL13 from Paracoccus denitrificans (strain Pd 1222).